We begin with the raw amino-acid sequence, 379 residues long: UDP-4-amino-4-deoxy-L-arabinose--oxoglutarate aminotransferase (379 aa).

Position 182 is an N6-(pyridoxal phosphate)lysine (Lys182).

It belongs to the DegT/DnrJ/EryC1 family. ArnB subfamily. In terms of assembly, homodimer. Pyridoxal 5'-phosphate is required as a cofactor.

The enzyme catalyses UDP-4-amino-4-deoxy-beta-L-arabinose + 2-oxoglutarate = UDP-beta-L-threo-pentopyranos-4-ulose + L-glutamate. It functions in the pathway nucleotide-sugar biosynthesis; UDP-4-deoxy-4-formamido-beta-L-arabinose biosynthesis; UDP-4-deoxy-4-formamido-beta-L-arabinose from UDP-alpha-D-glucuronate: step 2/3. The protein operates within bacterial outer membrane biogenesis; lipopolysaccharide biosynthesis. Its function is as follows. Catalyzes the conversion of UDP-4-keto-arabinose (UDP-Ara4O) to UDP-4-amino-4-deoxy-L-arabinose (UDP-L-Ara4N). The modified arabinose is attached to lipid A and is required for resistance to polymyxin and cationic antimicrobial peptides. The chain is UDP-4-amino-4-deoxy-L-arabinose--oxoglutarate aminotransferase from Escherichia coli O1:K1 / APEC.